The sequence spans 433 residues: 3-phosphoshikimate 1-carboxyvinyltransferase (433 aa).

3 residues coordinate 3-phosphoshikimate: K23, S24, and R28. K23 serves as a coordination point for phosphoenolpyruvate. Phosphoenolpyruvate-binding residues include G95 and R123. 6 residues coordinate 3-phosphoshikimate: S170, S171, Q172, S198, D317, and K344. Q172 is a binding site for phosphoenolpyruvate. Residue D317 is the Proton acceptor of the active site. Phosphoenolpyruvate is bound by residues R348, R391, and K416.

Belongs to the EPSP synthase family. In terms of assembly, monomer.

The protein localises to the cytoplasm. The enzyme catalyses 3-phosphoshikimate + phosphoenolpyruvate = 5-O-(1-carboxyvinyl)-3-phosphoshikimate + phosphate. Its pathway is metabolic intermediate biosynthesis; chorismate biosynthesis; chorismate from D-erythrose 4-phosphate and phosphoenolpyruvate: step 6/7. Functionally, catalyzes the transfer of the enolpyruvyl moiety of phosphoenolpyruvate (PEP) to the 5-hydroxyl of shikimate-3-phosphate (S3P) to produce enolpyruvyl shikimate-3-phosphate and inorganic phosphate. In Neisseria gonorrhoeae (strain NCCP11945), this protein is 3-phosphoshikimate 1-carboxyvinyltransferase.